Reading from the N-terminus, the 157-residue chain is Crossover junction endodeoxyribonuclease RuvC (157 aa).

Catalysis depends on residues Asp-7, Glu-66, and Asp-139. Mg(2+) contacts are provided by Asp-7, Glu-66, and Asp-139.

The protein belongs to the RuvC family. Homodimer which binds Holliday junction (HJ) DNA. The HJ becomes 2-fold symmetrical on binding to RuvC with unstacked arms; it has a different conformation from HJ DNA in complex with RuvA. In the full resolvosome a probable DNA-RuvA(4)-RuvB(12)-RuvC(2) complex forms which resolves the HJ. Mg(2+) serves as cofactor.

It localises to the cytoplasm. The catalysed reaction is Endonucleolytic cleavage at a junction such as a reciprocal single-stranded crossover between two homologous DNA duplexes (Holliday junction).. Its function is as follows. The RuvA-RuvB-RuvC complex processes Holliday junction (HJ) DNA during genetic recombination and DNA repair. Endonuclease that resolves HJ intermediates. Cleaves cruciform DNA by making single-stranded nicks across the HJ at symmetrical positions within the homologous arms, yielding a 5'-phosphate and a 3'-hydroxyl group; requires a central core of homology in the junction. The consensus cleavage sequence is 5'-(A/T)TT(C/G)-3'. Cleavage occurs on the 3'-side of the TT dinucleotide at the point of strand exchange. HJ branch migration catalyzed by RuvA-RuvB allows RuvC to scan DNA until it finds its consensus sequence, where it cleaves and resolves the cruciform DNA. Functionally, required for efficient infection in a mouse model system. The protein is Crossover junction endodeoxyribonuclease RuvC of Helicobacter pylori (strain G27).